Here is a 169-residue protein sequence, read N- to C-terminus: Lipoprotein signal peptidase (169 aa).

3 helical membrane passes run 1–21, 68–88, and 94–114; these read MPESSRFGHLPWLLLSVLILV, WQRWFFAAIAIVVSVVLVVWL, and HETLLAVALAMVLGGALGNLY. Catalysis depends on residues Asp124 and Asp143. A helical transmembrane segment spans residues 135-155; sequence FFPAFNLADTFITIGAILLAL.

Belongs to the peptidase A8 family.

The protein localises to the cell inner membrane. The enzyme catalyses Release of signal peptides from bacterial membrane prolipoproteins. Hydrolyzes -Xaa-Yaa-Zaa-|-(S,diacylglyceryl)Cys-, in which Xaa is hydrophobic (preferably Leu), and Yaa (Ala or Ser) and Zaa (Gly or Ala) have small, neutral side chains.. Its pathway is protein modification; lipoprotein biosynthesis (signal peptide cleavage). Functionally, this protein specifically catalyzes the removal of signal peptides from prolipoproteins. This Ectopseudomonas mendocina (strain ymp) (Pseudomonas mendocina) protein is Lipoprotein signal peptidase.